A 152-amino-acid polypeptide reads, in one-letter code: MAANSKTAIRLSLRAGERIFINGAVLRADRKVSLELLNDATFLLENHVLQPEDTTTPLRQLYFAAQMMLIEPAMREQAGATFAQMLKGMFAMFKDAEILNALKLVDELVHNGRVFEALKTIRAQYPREAELMGAQPVVWPVTKSGKSAGANP.

Belongs to the FlbT family.

Functionally, has a post-transcriptional repressor function in flagellum biogenesis. Associates with the 5'-UTR of fljK mRNA and promotes its degradation. This Brucella abortus (strain S19) protein is Probable flagellum biosynthesis repressor protein FlbT.